The sequence spans 246 residues: MDWQKITEKMCDFIQEKVKNSQSQGVVLGLSGGIDSALVATLCKRALKENVFALLMPTQISNKANLEDALRLCADLNLEYKIIEIQSILDAFIKQSENTTLVSLGNFAARIRMSLLYDYSALKNSLVIGTSNKSELLLGYGTIYGDLACAFNPIGSLYKSEIYALAKYLNLHENFIKKAPSADLWENQSDEADLGFSYAKIDEGLKALETNDEKLLRTLDPSLIAMLKNRMQKNAFKGKMPEILEI.

Position 29–36 (Gly29–Ser36) interacts with ATP. Asp35 is a binding site for Mg(2+). Deamido-NAD(+) is bound at residue Arg110. Position 130 (Thr130) interacts with ATP. Mg(2+) is bound at residue Glu135. Lys159 and Ser181 together coordinate ATP.

It belongs to the NAD synthetase family. Homodimer.

It carries out the reaction deamido-NAD(+) + NH4(+) + ATP = AMP + diphosphate + NAD(+) + H(+). It functions in the pathway cofactor biosynthesis; NAD(+) biosynthesis; NAD(+) from deamido-NAD(+) (ammonia route): step 1/1. In terms of biological role, catalyzes the ATP-dependent amidation of deamido-NAD to form NAD. Uses ammonia as a nitrogen source. The protein is NH(3)-dependent NAD(+) synthetase of Campylobacter jejuni subsp. jejuni serotype O:23/36 (strain 81-176).